Consider the following 493-residue polypeptide: 3-octaprenyl-4-hydroxybenzoate carboxy-lyase (493 aa).

Asn-172 contacts Mn(2+). Residues 175 to 177, 189 to 191, and 194 to 195 each bind prenylated FMN; these read IYR, RWL, and RG. Glu-238 serves as a coordination point for Mn(2+). The active-site Proton donor is the Asp-287.

It belongs to the UbiD family. In terms of assembly, homohexamer. Prenylated FMN is required as a cofactor. It depends on Mn(2+) as a cofactor.

The protein resides in the cell membrane. The catalysed reaction is a 4-hydroxy-3-(all-trans-polyprenyl)benzoate + H(+) = a 2-(all-trans-polyprenyl)phenol + CO2. It participates in cofactor biosynthesis; ubiquinone biosynthesis. Functionally, catalyzes the decarboxylation of 3-octaprenyl-4-hydroxy benzoate to 2-octaprenylphenol, an intermediate step in ubiquinone biosynthesis. The chain is 3-octaprenyl-4-hydroxybenzoate carboxy-lyase from Shewanella putrefaciens (strain CN-32 / ATCC BAA-453).